The chain runs to 490 residues: Probable alcohol acetyltransferase FCK4 (490 aa).

The protein belongs to the alcohol acetyltransferase FCK4 family.

Its pathway is secondary metabolite biosynthesis. In terms of biological role, probable alcohol acetyltransferase; part of the gene cluster that mediates the biosynthesis of cytokinins such as fusatin, fusatinic acids or 8-oxofusatin, known for their growth promoting and anti-senescence activities toward host plants. FCK1 is a bifunctional enzyme that performs the first steps in the biosynthesis of Fusarium cytokinins. It first condenses adenosine monophosphate (AMP) with dimethylallyl diphosphate (DMAPP) to yield isoprenyl adenosine monophosphate. It then catalyzes the removal of the phosphoribose to produce isopentenylaldehyde. The cytochrome P450 monooxygenase then converts isopentenylaldehyde to trans-zeatin. A condensation step converts trans-zeatin to fusatin which is further modified to produce fusatinic acid. The mechanism for oxidation of fusatin to fusatinic acid remains unknown. 8-oxofusatin could be produced through several pathways, via direct oxygenation of fusatin, or via the 8-oxo-pentenyladenine intermediate which itself must arise from either the prenylation of 8-oxo-AMP by FCK1 and/or oxygenation of isopentenylaldehyde. Both the FCK3 and FCK4 enzymes act downstream of the identified cytokinins to produce yet unidentified compounds. The chain is Probable alcohol acetyltransferase FCK4 from Fusarium pseudograminearum (strain CS3096) (Wheat and barley crown-rot fungus).